Consider the following 252-residue polypeptide: Triosephosphate isomerase (252 aa).

10–12 (NWK) is a binding site for substrate. His96 (electrophile) is an active-site residue. The active-site Proton acceptor is the Glu168. Substrate is bound by residues Gly174, Ser214, and 235-236 (GG).

It belongs to the triosephosphate isomerase family. In terms of assembly, homodimer.

The protein localises to the cytoplasm. The catalysed reaction is D-glyceraldehyde 3-phosphate = dihydroxyacetone phosphate. Its pathway is carbohydrate biosynthesis; gluconeogenesis. The protein operates within carbohydrate degradation; glycolysis; D-glyceraldehyde 3-phosphate from glycerone phosphate: step 1/1. Functionally, involved in the gluconeogenesis. Catalyzes stereospecifically the conversion of dihydroxyacetone phosphate (DHAP) to D-glyceraldehyde-3-phosphate (G3P). The protein is Triosephosphate isomerase of Lactococcus lactis subsp. lactis (strain IL1403) (Streptococcus lactis).